We begin with the raw amino-acid sequence, 447 residues long: Probable ribonuclease FAU-1 (447 aa).

The segment at 424-447 is disordered; it reads PEAPGGKICTPEGLTSAPPRSSSA.

The protein belongs to the FAU-1 family.

Functionally, probable RNase involved in rRNA stability through maturation and/or degradation of precursor rRNAs. Binds to RNA in loop regions with AU-rich sequences. This is Probable ribonuclease FAU-1 from Pyrobaculum neutrophilum (strain DSM 2338 / JCM 9278 / NBRC 100436 / V24Sta) (Thermoproteus neutrophilus).